Here is a 741-residue protein sequence, read N- to C-terminus: uncharacterized protein (741 aa).

5 helical membrane passes run 34-54 (WLLW…LLII), 76-96 (LIIP…FING), 120-140 (LAVL…FVSL), 156-176 (LSVF…LIII), and 187-207 (LLLL…AFSI). Positions 404-423 (EAEEKERQEKEEKEKAEKDN) are enriched in basic and acidic residues. 2 disordered regions span residues 404–473 (EAEE…FRPR) and 555–647 (QKEL…ENAK). A compositionally biased stretch (polar residues) spans 424-439 (GNGQDSNKVNSVSTEP). Basic and acidic residues-rich tracts occupy residues 445–465 (SDAD…DSSK) and 555–573 (QKEL…DQKS). Residues 623-643 (DNTDESEDKQSEEEEKFDEEI) are compositionally biased toward acidic residues. Helical transmembrane passes span 655–675 (AFFN…ENGA) and 715–735 (VIIA…FFAY).

This sequence to M.pneumoniae MPN_333.

The protein localises to the cell membrane. This is an uncharacterized protein from Mycoplasma pneumoniae (strain ATCC 29342 / M129 / Subtype 1) (Mycoplasmoides pneumoniae).